The sequence spans 115 residues: NADH-ubiquinone oxidoreductase chain 3 (115 aa).

Transmembrane regions (helical) follow at residues 3 to 23, 55 to 75, and 86 to 106; these read LLII…IAFW, FFLV…LLPL, and TMMA…SYEW.

The protein belongs to the complex I subunit 3 family. Core subunit of respiratory chain NADH dehydrogenase (Complex I) which is composed of 45 different subunits. Interacts with TMEM186. Interacts with TMEM242.

The protein localises to the mitochondrion inner membrane. It catalyses the reaction a ubiquinone + NADH + 5 H(+)(in) = a ubiquinol + NAD(+) + 4 H(+)(out). Functionally, core subunit of the mitochondrial membrane respiratory chain NADH dehydrogenase (Complex I) which catalyzes electron transfer from NADH through the respiratory chain, using ubiquinone as an electron acceptor. Essential for the catalytic activity of complex I. The protein is NADH-ubiquinone oxidoreductase chain 3 of Rattus norvegicus (Rat).